A 467-amino-acid polypeptide reads, in one-letter code: tRNA-2-methylthio-N(6)-dimethylallyladenosine synthase (467 aa).

Positions 2–118 (PSVFIKTFGC…VAEIADNLLK (117 aa)) constitute an MTTase N-terminal domain. Residues C11, C47, C81, C159, C163, and C166 each coordinate [4Fe-4S] cluster. Positions 145–379 (TKAQPIAYVS…LEIQNKITME (235 aa)) constitute a Radical SAM core domain. The TRAM domain maps to 382–445 (QKWVGQVVEI…GHTFYGTPLI (64 aa)).

Belongs to the methylthiotransferase family. MiaB subfamily. Monomer. The cofactor is [4Fe-4S] cluster.

The protein resides in the cytoplasm. The catalysed reaction is N(6)-dimethylallyladenosine(37) in tRNA + (sulfur carrier)-SH + AH2 + 2 S-adenosyl-L-methionine = 2-methylsulfanyl-N(6)-dimethylallyladenosine(37) in tRNA + (sulfur carrier)-H + 5'-deoxyadenosine + L-methionine + A + S-adenosyl-L-homocysteine + 2 H(+). Its function is as follows. Catalyzes the methylthiolation of N6-(dimethylallyl)adenosine (i(6)A), leading to the formation of 2-methylthio-N6-(dimethylallyl)adenosine (ms(2)i(6)A) at position 37 in tRNAs that read codons beginning with uridine. In Methylacidiphilum infernorum (isolate V4) (Methylokorus infernorum (strain V4)), this protein is tRNA-2-methylthio-N(6)-dimethylallyladenosine synthase.